A 142-amino-acid chain; its full sequence is Large ribosomal subunit protein uL11 (142 aa).

The protein belongs to the universal ribosomal protein uL11 family. Part of the ribosomal stalk of the 50S ribosomal subunit. Interacts with L10 and the large rRNA to form the base of the stalk. L10 forms an elongated spine to which L12 dimers bind in a sequential fashion forming a multimeric L10(L12)X complex. In terms of processing, one or more lysine residues are methylated.

Functionally, forms part of the ribosomal stalk which helps the ribosome interact with GTP-bound translation factors. This chain is Large ribosomal subunit protein uL11, found in Mycolicibacterium gilvum (strain PYR-GCK) (Mycobacterium gilvum (strain PYR-GCK)).